We begin with the raw amino-acid sequence, 355 residues long: tRNA-specific 2-thiouridylase MnmA (355 aa).

Residues G7–S14 and L33 each bind ATP. The Nucleophile role is filled by C94. C94 and C193 are disulfide-bonded. G119 provides a ligand contact to ATP. The interaction with tRNA stretch occupies residues K143–Q145. C193 serves as the catalytic Cysteine persulfide intermediate. An interaction with tRNA region spans residues R298–Y299.

Belongs to the MnmA/TRMU family.

The protein localises to the cytoplasm. It catalyses the reaction S-sulfanyl-L-cysteinyl-[protein] + uridine(34) in tRNA + AH2 + ATP = 2-thiouridine(34) in tRNA + L-cysteinyl-[protein] + A + AMP + diphosphate + H(+). Functionally, catalyzes the 2-thiolation of uridine at the wobble position (U34) of tRNA, leading to the formation of s(2)U34. The polypeptide is tRNA-specific 2-thiouridylase MnmA (Acaryochloris marina (strain MBIC 11017)).